Reading from the N-terminus, the 238-residue chain is Orotidine 5'-phosphate decarboxylase (238 aa).

Substrate-binding positions include Asp10, Lys32, 59–68, Thr122, Arg184, Gln193, Gly213, and Arg214; that span reads DLKLHDIPNT. Lys61 functions as the Proton donor in the catalytic mechanism.

The protein belongs to the OMP decarboxylase family. Type 1 subfamily. As to quaternary structure, homodimer.

The catalysed reaction is orotidine 5'-phosphate + H(+) = UMP + CO2. It functions in the pathway pyrimidine metabolism; UMP biosynthesis via de novo pathway; UMP from orotate: step 2/2. Its function is as follows. Catalyzes the decarboxylation of orotidine 5'-monophosphate (OMP) to uridine 5'-monophosphate (UMP). The polypeptide is Orotidine 5'-phosphate decarboxylase (Bacillus cereus (strain AH820)).